The following is a 115-amino-acid chain: Protein TrbA (115 aa).

A run of 4 helical transmembrane segments spans residues 5–25 (YLKMFTGVVLLIFVIIAGYFF), 39–59 (LVFLVVNIACLYVLTASLWFL), 60–80 (CGAIMSQGAALVVSIVAAALP), and 91–111 (IFICIMLSSVWSGVMWFFIRG).

It is found in the cell membrane. In Escherichia coli (strain K12), this protein is Protein TrbA (trbA).